A 1854-amino-acid polypeptide reads, in one-letter code: Dystrophin, isoform D (1854 aa).

8 disordered regions span residues M1–A65, G84–P161, Q240–A352, L516–S548, T595–S650, V716–A740, L783–P830, and V1012–R1036. Composition is skewed to low complexity over residues Q11–Q37 and G84–S96. Over residues G143–N157 the composition is skewed to polar residues. Over residues Q276–Q296 the composition is skewed to low complexity. Composition is skewed to polar residues over residues T331–D345 and P518–A536. Gly residues predominate over residues T595–A606. Polar residues predominate over residues V716–V727. Composition is skewed to low complexity over residues T728 to A740 and L783 to Q814. Residues N815–P830 show a composition bias toward polar residues. 2 Spectrin repeats span residues E936–E1069 and T1072–Q1176. Residues A1179–K1209 form a disordered region. The WW domain maps to Q1206 to M1239. Residues K1464 to T1520 form a ZZ-type zinc finger. Zn(2+)-binding residues include C1469, C1472, C1484, C1487, C1493, C1496, H1506, and H1510. Residue S1564 is modified to Phosphoserine. 2 disordered regions span residues E1673–G1701 and D1744–K1854. Polar residues-rich tracts occupy residues N1682 to L1694 and A1765 to G1796. Residues Q1815–D1826 are compositionally biased toward acidic residues. Residues S1827–T1845 show a composition bias toward low complexity.

Component of the dystrophin associated protein complex (DAPC). Interacts with Dg, via the Dg WW domain binding sites. During embryogenesis and in third instar larvae, expression is seen in pericardial cells of the dorsal vessel and in the ventral nerve cord. Expression is absent from both the embryonic and larval musculature.

It is found in the cell membrane. The protein resides in the sarcolemma. The protein localises to the cytoplasm. Its subcellular location is the cytoskeleton. In terms of biological role, required for the maintenance of appropriate synaptic retrograde communication and the stabilization of muscle cell architecture or physiology. May play a role in anchoring the cytoskeleton to the plasma membrane. This is Dystrophin, isoform D (Dys) from Drosophila melanogaster (Fruit fly).